A 377-amino-acid chain; its full sequence is Chorismate synthase (377 aa).

Residues Arg-48 and Arg-54 each contribute to the NADP(+) site. Residues 125-127 (RSS), 238-239 (NA), Gly-278, 293-297 (KPTSS), and Arg-319 contribute to the FMN site.

It belongs to the chorismate synthase family. Homotetramer. It depends on FMNH2 as a cofactor.

It catalyses the reaction 5-O-(1-carboxyvinyl)-3-phosphoshikimate = chorismate + phosphate. Its pathway is metabolic intermediate biosynthesis; chorismate biosynthesis; chorismate from D-erythrose 4-phosphate and phosphoenolpyruvate: step 7/7. Catalyzes the anti-1,4-elimination of the C-3 phosphate and the C-6 proR hydrogen from 5-enolpyruvylshikimate-3-phosphate (EPSP) to yield chorismate, which is the branch point compound that serves as the starting substrate for the three terminal pathways of aromatic amino acid biosynthesis. This reaction introduces a second double bond into the aromatic ring system. This is Chorismate synthase from Aromatoleum aromaticum (strain DSM 19018 / LMG 30748 / EbN1) (Azoarcus sp. (strain EbN1)).